Here is a 262-residue protein sequence, read N- to C-terminus: MEIIPPRLKEPLYRLYELRLRQGLAASKSDLPRHIAVLCDGNRRWARSAGYDDVSYGYRMGAAKIAEMLRWCHEAGIELATVYLLSTENLQRDPDELAALIEIITDVVEEICAPANHWSVRTVGDLGLIGEEPARRLRGAVESTPEVASFHVNVAVGYGGRREIVDAVRALLSKELANGATAEELVDAVTVEGISENLYTSGQPDPDLVIRTSGEQRLSGFLLWQSAYSEMWFTEAHWPAFRHVDFLRALRDYSARHRSYGR.

Asp40 is an active-site residue. Asp40 lines the Mg(2+) pocket. Residues 41–44 (GNRR), Trp45, and 86–88 (STE) each bind substrate. Asn89 serves as the catalytic Proton acceptor. Residues Arg92, Arg211, and 217 to 219 (RLS) contribute to the substrate site. Glu230 contributes to the Mg(2+) binding site.

It belongs to the UPP synthase family. Z-FPP synthase subfamily. As to quaternary structure, homodimer. Mg(2+) serves as cofactor.

The protein localises to the cytoplasm. The protein resides in the cell membrane. The catalysed reaction is isopentenyl diphosphate + (2E)-geranyl diphosphate = (2Z,6E)-farnesyl diphosphate + diphosphate. Its function is as follows. Catalyzes the condensation of only one isopentenyl pyrophosphate (IPP) unit in the cis configuration to E-geranyl diphosphate (E-GPP) generating the 15 carbon product (2Z,6E)-farnesyl diphosphate (Z-FPP or EZ-FPP). Z-FPP is the precursor of decaprenyl diphosphate, which has a central role in the biosynthesis of the mycobacterial cell wall. This chain is (2Z,6E)-farnesyl diphosphate synthase, found in Mycobacterium tuberculosis (strain CDC 1551 / Oshkosh).